A 466-amino-acid polypeptide reads, in one-letter code: Serine/threonine-protein kinase SSN3 (466 aa).

Residues 32–396 (YKILGFISSG…ARDALRHPWF (365 aa)) enclose the Protein kinase domain. 38 to 46 (ISSGTYGRV) is an ATP binding site. The tract at residues 58-105 (ASAKSALPSSTRAALSLPKDKLPSPSFTEDSDPLNNPEMCMRPGDRPA) is disordered. ATP is bound at residue K114. The Proton acceptor role is filled by D216. Positions 421-466 (THEDNGDAKMGSLPQSMAGGRLPSSSNFRPASGNIVQPAARKKARI) are disordered.

Belongs to the protein kinase superfamily. CMGC Ser/Thr protein kinase family. CDC2/CDKX subfamily. In terms of assembly, component of the SRB8-11 complex, a regulatory module of the Mediator complex. The cofactor is Mg(2+).

The protein resides in the nucleus. The enzyme catalyses L-seryl-[protein] + ATP = O-phospho-L-seryl-[protein] + ADP + H(+). It carries out the reaction L-threonyl-[protein] + ATP = O-phospho-L-threonyl-[protein] + ADP + H(+). It catalyses the reaction [DNA-directed RNA polymerase] + ATP = phospho-[DNA-directed RNA polymerase] + ADP + H(+). Functionally, component of the SRB8-11 complex. The SRB8-11 complex is a regulatory module of the Mediator complex which is itself involved in regulation of basal and activated RNA polymerase II-dependent transcription. The SRB8-11 complex may be involved in the transcriptional repression of a subset of genes regulated by Mediator. It may inhibit the association of the Mediator complex with RNA polymerase II to form the holoenzyme complex. The SRB8-11 complex phosphorylates the C-terminal domain (CTD) of the largest subunit of RNA polymerase II. In Cryptococcus neoformans var. neoformans serotype D (strain B-3501A) (Filobasidiella neoformans), this protein is Serine/threonine-protein kinase SSN3 (SSN3).